The sequence spans 128 residues: Large ribosomal subunit protein mL51 (128 aa).

The N-terminal 31 residues, 1 to 31 (MAGSLSWVAGRRLWGLVPLACRSFFLGVPRL), are a transit peptide targeting the mitochondrion.

This sequence belongs to the mitochondrion-specific ribosomal protein mL51 family. As to quaternary structure, component of the mitochondrial ribosome large subunit (39S) which comprises a 16S rRNA and about 50 distinct proteins. Interacts with OXA1L.

It localises to the mitochondrion. This is Large ribosomal subunit protein mL51 (MRPL51) from Bos taurus (Bovine).